Consider the following 607-residue polypeptide: UvrABC system protein C (607 aa).

One can recognise a GIY-YIG domain in the interval glycine 16–isoleucine 94. A UVR domain is found at asparagine 203 to valine 238.

Belongs to the UvrC family. Interacts with UvrB in an incision complex.

Its subcellular location is the cytoplasm. The UvrABC repair system catalyzes the recognition and processing of DNA lesions. UvrC both incises the 5' and 3' sides of the lesion. The N-terminal half is responsible for the 3' incision and the C-terminal half is responsible for the 5' incision. This Pseudomonas fluorescens (strain ATCC BAA-477 / NRRL B-23932 / Pf-5) protein is UvrABC system protein C.